The sequence spans 736 residues: Polyribonucleotide nucleotidyltransferase (736 aa).

The Mg(2+) site is built by D518 and D524. In terms of domain architecture, KH spans 584 to 644; the sequence is PSLQIFSINP…QKVEAAKEHI (61 aa). The region spanning 665–732 is the S1 motif domain; it reads GEVFKGKVKK…NKNKVELGRA (68 aa).

Belongs to the polyribonucleotide nucleotidyltransferase family. Requires Mg(2+) as cofactor.

It localises to the cytoplasm. It catalyses the reaction RNA(n+1) + phosphate = RNA(n) + a ribonucleoside 5'-diphosphate. Its function is as follows. Involved in mRNA degradation. Catalyzes the phosphorolysis of single-stranded polyribonucleotides processively in the 3'- to 5'-direction. This Wolinella succinogenes (strain ATCC 29543 / DSM 1740 / CCUG 13145 / JCM 31913 / LMG 7466 / NCTC 11488 / FDC 602W) (Vibrio succinogenes) protein is Polyribonucleotide nucleotidyltransferase.